We begin with the raw amino-acid sequence, 249 residues long: Coproheme decarboxylase (249 aa).

Residues arginine 131, 145–149, histidine 172, and glutamine 185 contribute to the Fe-coproporphyrin III site; that span reads YPMDK. Tyrosine 145 is a catalytic residue.

The protein belongs to the ChdC family. Type 1 subfamily. Fe-coproporphyrin III serves as cofactor.

It carries out the reaction Fe-coproporphyrin III + 2 H2O2 + 2 H(+) = heme b + 2 CO2 + 4 H2O. The enzyme catalyses Fe-coproporphyrin III + H2O2 + H(+) = harderoheme III + CO2 + 2 H2O. The catalysed reaction is harderoheme III + H2O2 + H(+) = heme b + CO2 + 2 H2O. It functions in the pathway porphyrin-containing compound metabolism; protoheme biosynthesis. Its function is as follows. Involved in coproporphyrin-dependent heme b biosynthesis. Catalyzes the decarboxylation of Fe-coproporphyrin III (coproheme) to heme b (protoheme IX), the last step of the pathway. The reaction occurs in a stepwise manner with a three-propionate intermediate. The protein is Coproheme decarboxylase of Staphylococcus epidermidis (strain ATCC 12228 / FDA PCI 1200).